Here is a 468-residue protein sequence, read N- to C-terminus: UDP-glucosyl transferase 74CD1 (468 aa).

Gly20 contributes to the UDP-alpha-D-glucose binding site. The active-site Proton acceptor is the His21. Catalysis depends on Asp114, which acts as the Charge relay. Residues Ser292, Trp344, Gln347, His362, Trp365, Asn366, Ser367, Glu370, Asp386, and Gln387 each coordinate UDP-alpha-D-glucose.

It belongs to the UDP-glycosyltransferase family. Mainly expressed in flowers, flower buds and young leaves, and, to a lesser extent, in old leaves, stems and roots.

The protein operates within secondary metabolite biosynthesis; terpenoid biosynthesis. Functionally, component of the oleanane-type triterpene saponins (e.g. saponarioside A and saponarioside B) biosynthetic pathway, leading to the production of natural products with detergent properties used as traditional sources of soap. A glycosyltransferase that, together with SDR1, mediates the conversion of QA-tri to QA-triF; UGT74CD1 may transfer 4-keto-6-deoxy-glucose to QA-tri, which is in turn reduced to D-fucose by SDR1, thus leading to QA-triF formation via the initiation of the C-28 sugar chain. The protein is UDP-glucosyl transferase 74CD1 of Saponaria officinalis (Common soapwort).